Here is a 312-residue protein sequence, read N- to C-terminus: Tyrosine recombinase XerC (312 aa).

One can recognise a Core-binding (CB) domain in the interval 1 to 103 (MISAFYAFLD…AIKSFSQYCI (103 aa)). Residues 124–306 (ELPSPITYEQ…SMKLKKQTHE (183 aa)) enclose the Tyr recombinase domain. Residues Arg164, Lys188, His258, Arg261, and His284 contribute to the active site. The active-site O-(3'-phospho-DNA)-tyrosine intermediate is Tyr293.

It belongs to the 'phage' integrase family. XerC subfamily. Forms a cyclic heterotetrameric complex composed of two molecules of XerC and two molecules of XerD.

It is found in the cytoplasm. Functionally, site-specific tyrosine recombinase, which acts by catalyzing the cutting and rejoining of the recombining DNA molecules. The XerC-XerD complex is essential to convert dimers of the bacterial chromosome into monomers to permit their segregation at cell division. It also contributes to the segregational stability of plasmids. In Chlamydia caviae (strain ATCC VR-813 / DSM 19441 / 03DC25 / GPIC) (Chlamydophila caviae), this protein is Tyrosine recombinase XerC.